Consider the following 187-residue polypeptide: MDTAPTWFTGQLLLALPGIGDPRFEHSVIAMISHDEDGAMGIGIADPIEGMTVGAVLDQLGIEHEAPLDQPVYLGGPVEPSRGFVLHSRDWGGEGAVLVADRWMVSSSHDILRAIGEGRGPSRWLVALGYAGWSPGQLEGEMVRHGWHVTPGSDALLFDTPPARRWQAAFAEAGVDARLLTTKGGEA.

It belongs to the UPF0301 (AlgH) family.

The protein is UPF0301 protein Sala_0165 of Sphingopyxis alaskensis (strain DSM 13593 / LMG 18877 / RB2256) (Sphingomonas alaskensis).